Consider the following 217-residue polypeptide: FMN-dependent NADH:quinone oxidoreductase (217 aa).

FMN-binding positions include Ser10 and 16-18 (SVS).

It belongs to the azoreductase type 1 family. As to quaternary structure, homodimer. FMN serves as cofactor.

The catalysed reaction is 2 a quinone + NADH + H(+) = 2 a 1,4-benzosemiquinone + NAD(+). The enzyme catalyses N,N-dimethyl-1,4-phenylenediamine + anthranilate + 2 NAD(+) = 2-(4-dimethylaminophenyl)diazenylbenzoate + 2 NADH + 2 H(+). Quinone reductase that provides resistance to thiol-specific stress caused by electrophilic quinones. Its function is as follows. Also exhibits azoreductase activity. Catalyzes the reductive cleavage of the azo bond in aromatic azo compounds to the corresponding amines. This chain is FMN-dependent NADH:quinone oxidoreductase, found in Polaromonas naphthalenivorans (strain CJ2).